A 349-amino-acid chain; its full sequence is Protein pelota homolog (349 aa).

It belongs to the eukaryotic release factor 1 family. Pelota subfamily. Monomer. Requires a divalent metal cation as cofactor.

It localises to the cytoplasm. May function in recognizing stalled ribosomes, interact with stem-loop structures in stalled mRNA molecules, and effect endonucleolytic cleavage of the mRNA. May play a role in the release non-functional ribosomes and degradation of damaged mRNAs. Has endoribonuclease activity. This chain is Protein pelota homolog, found in Nitrosopumilus maritimus (strain SCM1).